Here is a 212-residue protein sequence, read N- to C-terminus: Transmembrane emp24 domain-containing protein p24delta7 (212 aa).

The N-terminal stretch at 1–22 (MNHRRSSIVLLILSILSPVTLS) is a signal peptide. At 23–179 (IRYELLSGHT…HNLNIATNSK (157 aa)) the chain is on the lumenal side. The GOLD domain occupies 32 to 147 (TKCISEEIHA…VETMEFEVKK (116 aa)). Residues 162–175 (LRDREEEMHNLNIA) adopt a coiled-coil conformation. Position 165 is an omega-N-methylated arginine (R165). A helical membrane pass occupies residues 180–200 (MAWLSFVSLAVCLSVAGLQFW). Residues 201–212 (HLKTFFQKKKLI) are Cytoplasmic-facing. The COPII vesicle coat-binding signature appears at 205 to 206 (FF). A COPI vesicle coat-binding motif is present at residues 205–212 (FFQKKKLI).

This sequence belongs to the EMP24/GP25L family. As to quaternary structure, probably oligomerizes with other members of the EMP24/GP25L family. Associates with the COPI vesicle coat (coatomer). Associates with the COPII vesicle coat (coatomer).

Its subcellular location is the endoplasmic reticulum membrane. It is found in the golgi apparatus. The protein localises to the cis-Golgi network membrane. It localises to the golgi stack membrane. In terms of biological role, involved in vesicular protein trafficking. Mainly functions in the early secretory pathway. Thought to act as cargo receptor at the lumenal side for incorporation of secretory cargo molecules into transport vesicles and to be involved in vesicle coat formation at the cytoplasmic side. This is Transmembrane emp24 domain-containing protein p24delta7 from Arabidopsis thaliana (Mouse-ear cress).